Reading from the N-terminus, the 117-residue chain is Large ribosomal subunit protein uL24 (117 aa).

Over residues 1-12 (MSKKNSQTSPQR) the composition is skewed to polar residues. The interval 1–20 (MSKKNSQTSPQRQKMHVKKG) is disordered.

It belongs to the universal ribosomal protein uL24 family. In terms of assembly, part of the 50S ribosomal subunit.

In terms of biological role, one of two assembly initiator proteins, it binds directly to the 5'-end of the 23S rRNA, where it nucleates assembly of the 50S subunit. Functionally, one of the proteins that surrounds the polypeptide exit tunnel on the outside of the subunit. The sequence is that of Large ribosomal subunit protein uL24 from Microcystis aeruginosa (strain NIES-843 / IAM M-2473).